The following is a 439-amino-acid chain: MGVANDSSPEYQWMSPHRLSDTVILGDCLYFNNIMSQLDLHQNWAPSVRLLNYFKNFNKETLLKIEENDYINSSFFQQKDKRFYPINDDFYHISTGGYGIVFKIDNYVVKFVFEATKLYSPMETTAEFTVPKFLYNNLKGDEKKLIVCAWAMGLNYKLTFLHTLYKRVLHMLLLLIQTMDGQELSLRYSSKVFLKAFNERKDSIKFVKLLSHFYPAVINSNINVINYFNRMFHFFEHEKRTNYEYERGNIIIFPLALYSADKVDTELAIKLGFKSLVQYIKFIFLQMALLYIKIYELPCCDNFLHADLKPDNILLFDSNEPIIIHLKDKKFVFNERIKSALNDFDFSQVAGIINKKIKNNFKVKHNWYYDFHFFVHTLLKTYPEIEKDIEFSTALEEFIMCTKTDCDKYRLKVSILHPISFLEKFIMRDIFSDWINGGN.

The Protein kinase domain occupies 87-439 (NDDFYHISTG…IFSDWINGGN (353 aa)). Residues 93 to 101 (ISTGGYGIV) and lysine 117 each bind ATP. Aspartate 307 acts as the Proton acceptor in catalysis.

This sequence belongs to the protein kinase superfamily. Ser/Thr protein kinase family. Poxviruses subfamily. Phosphorylated in vivo. Autophosphorylated in vitro.

The protein resides in the host endoplasmic reticulum. Its subcellular location is the host endoplasmic reticulum-Golgi intermediate compartment. It catalyses the reaction L-seryl-[protein] + ATP = O-phospho-L-seryl-[protein] + ADP + H(+). The enzyme catalyses L-threonyl-[protein] + ATP = O-phospho-L-threonyl-[protein] + ADP + H(+). Essential serine-protein kinase involved in the early stage of virion morphogenesis. In Vaccinia virus (strain Ankara) (VACV), this protein is Serine/threonine-protein kinase 2 (OPG054).